The chain runs to 481 residues: 5-hydroxytryptamine receptor 2B (481 aa).

Over 1–56 the chain is Extracellular; sequence MALSYRVSELQSTIPEHILQSTFVHVISSNWSGLQTESIPEEMKQIVEEQGNKLHW. A glycan (N-linked (GlcNAc...) asparagine) is linked at N30. The chain crosses the membrane as a helical span at residues 57-79; it reads AALLILMVIIPTIGGNTLVILAV. At 80-90 the chain is on the cytoplasmic side; sequence SLEKKLQYATN. Residues 91–113 traverse the membrane as a helical segment; the sequence is YFLMSLAVADLLVGLFVMPIALL. The Extracellular segment spans residues 114-129; the sequence is TIMFEAMWPLPLVLCP. A disulfide bridge links C128 with C207. Residues 130 to 151 traverse the membrane as a helical segment; sequence AWLFLDVLFSTASIMHLCAISV. Ergotamine is bound by residues D135 and T140. Positions 152–154 match the DRY motif; important for ligand-induced conformation changes motif; it reads DRY. Topologically, residues 152–171 are cytoplasmic; that stretch reads DRYIAIKKPIQANQYNSRAT. The chain crosses the membrane as a helical span at residues 172-192; it reads AFIKITVVWLISIGIAIPVPI. Topologically, residues 193 to 216 are extracellular; the sequence is KGIETDVDNPNNITCVLTKERFGD. Position 209 (L209) interacts with ergotamine. Residues 212 to 215 carry the [DE]RFG motif; may stabilize a conformation that preferentially activates signaling via beta-arrestin family members motif; that stretch reads ERFG. Residues 217-239 traverse the membrane as a helical segment; the sequence is FMLFGSLAAFFTPLAIMIVTYFL. Topologically, residues 240–324 are cytoplasmic; sequence TIHALQKKAY…TISNEQRASK (85 aa). Residues 325 to 345 traverse the membrane as a helical segment; that stretch reads VLGIVFFLFLLMWCPFFITNI. The Extracellular segment spans residues 346–360; it reads TLVLCDSCNQTTLQM. C350 and C353 are disulfide-bonded. The chain crosses the membrane as a helical span at residues 361–382; it reads LLEIFVWIGYVSSGVNPLVYTL. Positions 376 to 380 match the NPxxY motif; important for ligand-induced conformation changes and signaling motif; the sequence is NPLVY. At 383-481 the chain is on the cytoplasmic side; that stretch reads FNKTFRDAFG…DKTEEQVSYV (99 aa). The S-palmitoyl cysteine moiety is linked to residue C397. Residues 479–481 carry the PDZ-binding motif; that stretch reads SYV.

The protein belongs to the G-protein coupled receptor 1 family. In terms of assembly, interacts (via C-terminus) with MPDZ. In terms of tissue distribution, ubiquitous. Detected in liver, kidney, heart, pulmonary artery, and intestine. Detected at lower levels in blood, placenta and brain, especially in cerebellum, occipital cortex and frontal cortex.

Its subcellular location is the cell membrane. It localises to the synapse. The protein resides in the synaptosome. Functionally, G-protein coupled receptor for 5-hydroxytryptamine (serotonin). Also functions as a receptor for various ergot alkaloid derivatives and psychoactive substances. Ligand binding causes a conformation change that triggers signaling via guanine nucleotide-binding proteins (G proteins) and modulates the activity of downstream effectors. HTR2B is coupled to G(q)/G(11) G alpha proteins and activates phospholipase C-beta, releasing diacylglycerol (DAG) and inositol 1,4,5-trisphosphate (IP3) second messengers that modulate the activity of phosphatidylinositol 3-kinase and promote the release of Ca(2+) ions from intracellular stores, respectively. Beta-arrestin family members inhibit signaling via G proteins and mediate activation of alternative signaling pathways. Plays a role in the regulation of dopamine and 5-hydroxytryptamine release, 5-hydroxytryptamine uptake and in the regulation of extracellular dopamine and 5-hydroxytryptamine levels, and thereby affects neural activity. May play a role in the perception of pain. Plays a role in the regulation of behavior, including impulsive behavior. Required for normal proliferation of embryonic cardiac myocytes and normal heart development. Protects cardiomyocytes against apoptosis. Plays a role in the adaptation of pulmonary arteries to chronic hypoxia. Plays a role in vasoconstriction. Required for normal osteoblast function and proliferation, and for maintaining normal bone density. Required for normal proliferation of the interstitial cells of Cajal in the intestine. In Homo sapiens (Human), this protein is 5-hydroxytryptamine receptor 2B.